The sequence spans 150 residues: Catabolic 3-dehydroquinase (150 aa).

Tyrosine 24 (proton acceptor) is an active-site residue. Residues asparagine 75, histidine 81, and aspartate 88 each coordinate substrate. Residue histidine 101 is the Proton donor of the active site. Residues valine 102–serine 103 and arginine 112 each bind substrate.

It belongs to the type-II 3-dehydroquinase family. In terms of assembly, homododecamer. Adopts a ring-like structure, composed of an arrangement of two hexameric rings stacked on top of one another.

It carries out the reaction 3-dehydroquinate = 3-dehydroshikimate + H2O. Its pathway is aromatic compound metabolism; 3,4-dihydroxybenzoate biosynthesis; 3,4-dihydroxybenzoate from 3-dehydroquinate: step 1/2. Is involved in the catabolism of quinate. Allows the utilization of quinate as carbon source via the beta-ketoadipate pathway. This Aspergillus clavatus (strain ATCC 1007 / CBS 513.65 / DSM 816 / NCTC 3887 / NRRL 1 / QM 1276 / 107) protein is Catabolic 3-dehydroquinase.